The primary structure comprises 374 residues: Chaperone protein DnaJ (374 aa).

Positions 4–68 constitute a J domain; that stretch reads DYYDILGVSR…ETRARYDRFG (65 aa). A CR-type zinc finger spans residues 133–215; the sequence is GGEKQIRITH…CGGNGQAQVT (83 aa). Residues cysteine 146, cysteine 149, cysteine 163, cysteine 166, cysteine 189, cysteine 192, cysteine 203, and cysteine 206 each contribute to the Zn(2+) site. CXXCXGXG motif repeat units follow at residues 146–153, 163–170, 189–196, and 203–210; these read CTTCNGSG, CGTCGGAG, CPTCNGKG, and CETCGGNG.

Belongs to the DnaJ family. Homodimer. Zn(2+) serves as cofactor.

It localises to the cytoplasm. In terms of biological role, participates actively in the response to hyperosmotic and heat shock by preventing the aggregation of stress-denatured proteins and by disaggregating proteins, also in an autonomous, DnaK-independent fashion. Unfolded proteins bind initially to DnaJ; upon interaction with the DnaJ-bound protein, DnaK hydrolyzes its bound ATP, resulting in the formation of a stable complex. GrpE releases ADP from DnaK; ATP binding to DnaK triggers the release of the substrate protein, thus completing the reaction cycle. Several rounds of ATP-dependent interactions between DnaJ, DnaK and GrpE are required for fully efficient folding. Also involved, together with DnaK and GrpE, in the DNA replication of plasmids through activation of initiation proteins. This Cyanothece sp. (strain PCC 7425 / ATCC 29141) protein is Chaperone protein DnaJ.